A 219-amino-acid polypeptide reads, in one-letter code: Guanylate kinase (219 aa).

Positions 15-194 constitute a Guanylate kinase-like domain; it reads GLMFVLSSPS…AFESVKAILR (180 aa). 22–29 contacts ATP; it reads SPSGAGKT.

This sequence belongs to the guanylate kinase family.

The protein resides in the cytoplasm. It catalyses the reaction GMP + ATP = GDP + ADP. Functionally, essential for recycling GMP and indirectly, cGMP. This chain is Guanylate kinase, found in Rhodopseudomonas palustris (strain BisB5).